Reading from the N-terminus, the 77-residue chain is MAAEKFETSLKKLEEVVRKLEGGSLSLDDSIKAFEEGVKHAAFCAKKLDEAERKVEVLIKQRDGSFRKEPFTTDNDD.

It belongs to the XseB family. As to quaternary structure, heterooligomer composed of large and small subunits.

The protein localises to the cytoplasm. The catalysed reaction is Exonucleolytic cleavage in either 5'- to 3'- or 3'- to 5'-direction to yield nucleoside 5'-phosphates.. Its function is as follows. Bidirectionally degrades single-stranded DNA into large acid-insoluble oligonucleotides, which are then degraded further into small acid-soluble oligonucleotides. The protein is Exodeoxyribonuclease 7 small subunit of Trichlorobacter lovleyi (strain ATCC BAA-1151 / DSM 17278 / SZ) (Geobacter lovleyi).